The following is a 92-amino-acid chain: Small ribosomal subunit protein uS19 (92 aa).

The protein belongs to the universal ribosomal protein uS19 family.

Functionally, protein S19 forms a complex with S13 that binds strongly to the 16S ribosomal RNA. The sequence is that of Small ribosomal subunit protein uS19 from Oceanobacillus iheyensis (strain DSM 14371 / CIP 107618 / JCM 11309 / KCTC 3954 / HTE831).